A 658-amino-acid chain; its full sequence is MVPRLLLRAWPRGPAVGPGAPSRPLSAGSGPGQYLQRSIVPTMHYQDSLPRLPIPKLEDTIRRYLSAQKPLLDDGQFRKTEQFCKNFENGIGKELHEQLVAQDKQNKHTSYISGPWFDMYLSARDSVVLNFNPFMAFNPDPKSEYNDQLTRATNMTVSAIRFLKTLRDGLLEPEVFHLNPAKSDTDTFKRLIRFVPSSLSWYGAYLVNAYPLDMSQYFRLFNSTRLPKPSRDELFTDDKARHLLVLRKGNFYIFDVLDQDGNIVSPSEIQAHLKYILSDSSPAPEFPLAYLTSENRDIWAELRQKLMSSGNEESLRKVDSAVFCLCLDDFPIKDLVHLSHNMLHGDGTNRWFDKSFNLIIAKDGSAAVHFEHSWGDGVAVLRFFNEVFKDSTQIPAITPQSQPATADSTVTVQKLNFKLTDALKTGITAAKEKFDATMKTLTIDCLQFQRGGKEFLKKQKLSPDAVAQLAFQMAFLRQYGQTVATYESCSTAAFKHGRTETIRPASIYTKRCSEAFVREPSRHSAGELQQMMAECSKYHGQLTKEAAMGQGFDRHLFALRHLAAAKGIILPELYLDPAYGQINHNVLSTSTLSSPAVNLGGFAPVVSDGFGVGYAVHGNWIGCNVSSYPGRNAREFLQCVEKALEDMFDALEGKSIKS.

The transit peptide at 1-25 (MVPRLLLRAWPRGPAVGPGAPSRPL) directs the protein to the mitochondrion. The Mitochondrial matrix portion of the chain corresponds to 26–178 (SAGSGPGQYL…GLLEPEVFHL (153 aa)). The residue at position 69 (Lys-69) is an N6-succinyllysine. N6-acetyllysine is present on Lys-79. Residue Lys-85 is modified to N6-succinyllysine. The segment at residues 179-208 (NPAKSDTDTFKRLIRFVPSSLSWYGAYLVN) is an intramembrane region (note=Mitochondrial inner membrane). Over 209–658 (AYPLDMSQYF…DALEGKSIKS (450 aa)) the chain is Mitochondrial matrix. Residue Lys-239 is modified to N6-acetyllysine; alternate. At Lys-239 the chain carries N6-succinyllysine; alternate. Residue Lys-305 is modified to N6-acetyllysine. His-372 functions as the Proton acceptor in the catalytic mechanism. An N6-acetyllysine; alternate modification is found at Lys-418. Lys-418 bears the N6-succinyllysine; alternate mark. N6-succinyllysine occurs at positions 424 and 439. 452–464 (GKEFLKKQKLSPD) contacts CoA. Positions 486, 488, and 499 each coordinate (R)-carnitine. Residues Lys-510 and Lys-544 each carry the N6-acetyllysine; alternate modification. Lys-510 and Lys-544 each carry N6-succinyllysine; alternate.

This sequence belongs to the carnitine/choline acetyltransferase family.

It is found in the mitochondrion inner membrane. The enzyme catalyses (R)-carnitine + hexadecanoyl-CoA = O-hexadecanoyl-(R)-carnitine + CoA. It catalyses the reaction octanoyl-CoA + (R)-carnitine = O-octanoyl-(R)-carnitine + CoA. The catalysed reaction is decanoyl-CoA + (R)-carnitine = O-decanoyl-(R)-carnitine + CoA. It carries out the reaction dodecanoyl-CoA + (R)-carnitine = O-dodecanoyl-R-carnitine + CoA. The enzyme catalyses tetradecanoyl-CoA + (R)-carnitine = O-tetradecanoyl-(R)-carnitine + CoA. It catalyses the reaction (R)-carnitine + octadecanoyl-CoA = O-octadecanoyl-(R)-carnitine + CoA. The catalysed reaction is eicosanoyl-CoA + (R)-carnitine = O-eicosanoyl-(R)-carnitine + CoA. It carries out the reaction (9Z)-tetradecenoyl-CoA + (R)-carnitine = O-(9Z)-tetradecenoyl-(R)-carnitine + CoA. The enzyme catalyses (5Z)-tetradecenoyl-CoA + (R)-carnitine = O-(5Z)-tetradecenoyl-(R)-carnitine + CoA. It catalyses the reaction (R)-carnitine + (9Z)-octadecenoyl-CoA = O-(9Z)-octadecenoyl-(R)-carnitine + CoA. The catalysed reaction is 4,8-dimethylnonanoyl-CoA + (R)-carnitine = O-4,8-dimethylnonanoyl-(R)-carnitine + CoA. The protein operates within lipid metabolism; fatty acid beta-oxidation. Involved in the intramitochondrial synthesis of acylcarnitines from accumulated acyl-CoA metabolites. Reconverts acylcarnitines back into the respective acyl-CoA esters that can then undergo beta-oxidation, an essential step for the mitochondrial uptake of long-chain fatty acids and their subsequent beta-oxidation in the mitochondrion. Active with medium (C8-C12) and long-chain (C14-C18) acyl-CoA esters. The sequence is that of Carnitine O-palmitoyltransferase 2, mitochondrial (CPT2) from Macaca fascicularis (Crab-eating macaque).